Consider the following 210-residue polypeptide: Leucyl/phenylalanyl-tRNA--protein transferase (210 aa).

The protein belongs to the L/F-transferase family.

It localises to the cytoplasm. The catalysed reaction is N-terminal L-lysyl-[protein] + L-leucyl-tRNA(Leu) = N-terminal L-leucyl-L-lysyl-[protein] + tRNA(Leu) + H(+). The enzyme catalyses N-terminal L-arginyl-[protein] + L-leucyl-tRNA(Leu) = N-terminal L-leucyl-L-arginyl-[protein] + tRNA(Leu) + H(+). It catalyses the reaction L-phenylalanyl-tRNA(Phe) + an N-terminal L-alpha-aminoacyl-[protein] = an N-terminal L-phenylalanyl-L-alpha-aminoacyl-[protein] + tRNA(Phe). Functionally, functions in the N-end rule pathway of protein degradation where it conjugates Leu, Phe and, less efficiently, Met from aminoacyl-tRNAs to the N-termini of proteins containing an N-terminal arginine or lysine. In Ruegeria pomeroyi (strain ATCC 700808 / DSM 15171 / DSS-3) (Silicibacter pomeroyi), this protein is Leucyl/phenylalanyl-tRNA--protein transferase.